The primary structure comprises 219 residues: tRNA (guanine-N(7)-)-methyltransferase (219 aa).

4 residues coordinate S-adenosyl-L-methionine: Glu46, Glu71, Asp100, and Asp122. Asp122 is a catalytic residue. Lys126 is a binding site for substrate. Positions 128 to 133 (KHEKRR) are interaction with RNA. Substrate is bound by residues Asp158 and 199–202 (TEYE).

It belongs to the class I-like SAM-binding methyltransferase superfamily. TrmB family.

The catalysed reaction is guanosine(46) in tRNA + S-adenosyl-L-methionine = N(7)-methylguanosine(46) in tRNA + S-adenosyl-L-homocysteine. It functions in the pathway tRNA modification; N(7)-methylguanine-tRNA biosynthesis. In terms of biological role, catalyzes the formation of N(7)-methylguanine at position 46 (m7G46) in tRNA. The polypeptide is tRNA (guanine-N(7)-)-methyltransferase (Oenococcus oeni (strain ATCC BAA-331 / PSU-1)).